The primary structure comprises 734 residues: Cell surface glycoprotein gp138B (734 aa).

Positions 1 to 20 (MKIILTLSIFLICFLQLGQS) are cleaved as a signal peptide. N-linked (GlcNAc...) asparagine glycans are attached at residues Asn58, Asn89, Asn124, Asn198, Asn224, Asn392, Asn420, Asn435, Asn482, Asn498, Asn523, Asn596, Asn605, Asn614, Asn621, and Asn630. Positions 504–592 (PFIKSYGFLE…SSNEVTFYYF (89 aa)) constitute an IPT/TIG domain. Residues 678 to 712 (GETPTPSTTPSTTPSTTPSTTPSSTPTQSPGDDGS) are disordered. Residues 680 to 712 (TPTPSTTPSTTPSTTPSTTPSSTPTQSPGDDGS) are compositionally biased toward low complexity. 4 consecutive repeat copies span residues 683-686 (PSTT), 687-690 (PSTT), 691-694 (PSTT), and 695-698 (PSTT). The segment at 683 to 698 (PSTTPSTTPSTTPSTT) is 4 X 4 AA tandem repeats of P-S-T-T. Gly708 carries GPI-like-anchor amidated glycine lipidation. Positions 709-734 (DDGSTSSTLSISFYLITLLLLTQQFI) are cleaved as a propeptide — removed in mature form.

The sugar chains may play important roles in cell fusion. Post-translationally, the GPI-like-anchor contains a phosphoceramide group, rather than a phosphatidyl group.

It localises to the cell membrane. Involved in the sexual cell fusion of D.discoideum. The protein is Cell surface glycoprotein gp138B (GP138B) of Dictyostelium discoideum (Social amoeba).